Here is a 400-residue protein sequence, read N- to C-terminus: Phosphoglycerate kinase (400 aa).

Residues 23–25 (DLN), Arg-38, 61–64 (HFGR), Arg-120, and Arg-153 each bind substrate. ATP-binding positions include Lys-203, Glu-325, and 355–358 (GGDT).

It belongs to the phosphoglycerate kinase family. In terms of assembly, monomer.

The protein resides in the cytoplasm. The catalysed reaction is (2R)-3-phosphoglycerate + ATP = (2R)-3-phospho-glyceroyl phosphate + ADP. It participates in carbohydrate degradation; glycolysis; pyruvate from D-glyceraldehyde 3-phosphate: step 2/5. The polypeptide is Phosphoglycerate kinase (Methylorubrum populi (strain ATCC BAA-705 / NCIMB 13946 / BJ001) (Methylobacterium populi)).